The sequence spans 242 residues: MDNIRTVSDTKRKFYGYHTRPINSIYRRFVEELLVEMHLLSVNVDFKYDPIYALGVVTSFERFMQGYSPESDKTSIFNALCQAVDGNSEQYHQEAEALINEAKGLSITEFKEKLGQEGGDGILWGTCGAIAQNPKFKYSRLFGVGLYTLLMEIDPDLVKEEDKRNQTIKEVSDALQFSSDKLQKDLDLYRSNLDKMQQLLTVIEDTLEADRKKRASQKLEKKPEVVEEKEHKENEEQQQSSN.

Positions 178–209 (SSDKLQKDLDLYRSNLDKMQQLLTVIEDTLEA) form a coiled coil. A disordered region spans residues 212–242 (KKRASQKLEKKPEVVEEKEHKENEEQQQSSN). A compositionally biased stretch (basic and acidic residues) spans 217-235 (QKLEKKPEVVEEKEHKENE).

The protein belongs to the THF1 family.

In terms of biological role, may be involved in photosynthetic membrane biogenesis. The protein is Protein Thf1 of Crocosphaera subtropica (strain ATCC 51142 / BH68) (Cyanothece sp. (strain ATCC 51142)).